A 76-amino-acid polypeptide reads, in one-letter code: Exodeoxyribonuclease 7 small subunit (76 aa).

Belongs to the XseB family. As to quaternary structure, heterooligomer composed of large and small subunits.

The protein resides in the cytoplasm. The catalysed reaction is Exonucleolytic cleavage in either 5'- to 3'- or 3'- to 5'-direction to yield nucleoside 5'-phosphates.. In terms of biological role, bidirectionally degrades single-stranded DNA into large acid-insoluble oligonucleotides, which are then degraded further into small acid-soluble oligonucleotides. This is Exodeoxyribonuclease 7 small subunit from Geobacter metallireducens (strain ATCC 53774 / DSM 7210 / GS-15).